The primary structure comprises 229 residues: Endonuclease V (229 aa).

Positions 46 and 114 each coordinate Mg(2+).

It belongs to the endonuclease V family. The cofactor is Mg(2+).

The protein localises to the cytoplasm. It catalyses the reaction Endonucleolytic cleavage at apurinic or apyrimidinic sites to products with a 5'-phosphate.. DNA repair enzyme involved in the repair of deaminated bases. Selectively cleaves double-stranded DNA at the second phosphodiester bond 3' to a deoxyinosine leaving behind the intact lesion on the nicked DNA. In Streptomyces avermitilis (strain ATCC 31267 / DSM 46492 / JCM 5070 / NBRC 14893 / NCIMB 12804 / NRRL 8165 / MA-4680), this protein is Endonuclease V.